Consider the following 627-residue polypeptide: Serine/threonine-protein phosphatase 2A 56 kDa regulatory subunit delta 2 isoform (627 aa).

The disordered stretch occupies residues Met-1–Tyr-37.

It belongs to the phosphatase 2A regulatory subunit B family. PP2A consists of a common heterodimeric core enzyme, composed of a 36 kDa catalytic subunit (subunit C) and a 65 kDa constant regulatory subunit (PR65 or subunit A), that associates with a variety of regulatory subunits. Proteins that associate with the core dimer include three families of regulatory subunits B (the R2/B/PR55/B55, R3/B''/PR72/PR130/PR59 and R5/B'/B56 families), the 48 kDa variable regulatory subunit, viral proteins, and cell signaling molecules.

The protein resides in the cytoplasm. Its subcellular location is the cell tip. In terms of biological role, the B regulatory subunit might modulate substrate selectivity and catalytic activity, and might also direct the localization of the catalytic enzyme to a particular subcellular compartment. Has a role in cell shape control and septum formation. The sequence is that of Serine/threonine-protein phosphatase 2A 56 kDa regulatory subunit delta 2 isoform (par2) from Schizosaccharomyces pombe (strain 972 / ATCC 24843) (Fission yeast).